Here is a 426-residue protein sequence, read N- to C-terminus: MGIILGNGNVLNQAGELTPMEILVEKGRITAMGETLDRCGHDWIDCHGGMISAGLIDAHVHLREPGFEHKETIETGAKAAVQGGFTTVACMPNTRPSIDSVETVTYILDKASEAGMARVIPYGAITVRQLGKELTDFAGLKEAGIFALTDDGVGVQSTAMMKKAMQKAAELGIAIVAHCEDEDLLIPGAALHDGVVAARHGLPGIPSESESIHVGRDILLAEQTGVHYHVCHISAKESVRLVRDGKRAGVNVTCEVSPHHLLLCDEDIPDNLDTNWKMNPPLRSREDRAALIAGLKDGTIDMIATDHAPHTQEEKANGINRAPFGIVGLETAFPLLYTNLVQTGELTLKKLVELLTVKPAEAFKLPYGRLEVGAPADLTVMDLETEKTIDPSTFASKGINTPFAGWVCKGWPTLTLVDGKIVYQNV.

Residues His59 and His61 each coordinate Zn(2+). Substrate is bound by residues 61–63 (HLR) and Asn93. Zn(2+)-binding residues include Asp151, His178, and His232. Asn279 is a substrate binding site. Asp306 provides a ligand contact to Zn(2+). Residue Asp306 is part of the active site. Substrate contacts are provided by residues His310 and 324 to 325 (FG).

It belongs to the metallo-dependent hydrolases superfamily. DHOase family. Class I DHOase subfamily. It depends on Zn(2+) as a cofactor.

It catalyses the reaction (S)-dihydroorotate + H2O = N-carbamoyl-L-aspartate + H(+). It participates in pyrimidine metabolism; UMP biosynthesis via de novo pathway; (S)-dihydroorotate from bicarbonate: step 3/3. Its function is as follows. Catalyzes the reversible cyclization of carbamoyl aspartate to dihydroorotate. This Brevibacillus brevis (strain 47 / JCM 6285 / NBRC 100599) protein is Dihydroorotase.